A 205-amino-acid polypeptide reads, in one-letter code: Pyrrolidone-carboxylate peptidase (205 aa).

Residues Glu78, Cys141, and His165 contribute to the active site.

Belongs to the peptidase C15 family. As to quaternary structure, homotetramer.

It is found in the cytoplasm. It catalyses the reaction Release of an N-terminal pyroglutamyl group from a polypeptide, the second amino acid generally not being Pro.. In terms of biological role, removes 5-oxoproline from various penultimate amino acid residues except L-proline. The protein is Pyrrolidone-carboxylate peptidase of Thermosipho africanus (strain TCF52B).